Consider the following 207-residue polypeptide: Ras-related protein Rab-7a (207 aa).

T2 bears the N-acetylthreonine mark. GTP-binding residues include S17, G18, V19, G20, K21, T22, S23, S34, N35, Y37, and T40. Mg(2+) is bound at residue T22. The Switch 1 motif lies at 28 to 41; the sequence is YVNKKFSNQYKATI. The Mg(2+) site is built by T40 and D63. G66 provides a ligand contact to GTP. Residues 67 to 82 carry the Switch 2 motif; the sequence is QERFQSLGVAFYRGAD. A Phosphoserine modification is found at S72. GTP-binding residues include N125, K126, D128, A156, and K157. Residues K191 and K194 each participate in a glycyl lysine isopeptide (Lys-Gly) (interchain with G-Cter in ubiquitin) cross-link. 2 S-geranylgeranyl cysteine lipidation sites follow: C205 and C207. Residue C207 is modified to Cysteine methyl ester.

It belongs to the small GTPase superfamily. Rab family. In terms of assembly, interacts with NTRK1/TRKA. Interacts with RILP. Interacts with PSMA7. Interacts with RNF115. Interacts with FYCO1. Interacts with the PIK3C3/VPS34-PIK3R4 complex. The GTP-bound form interacts with OSBPL1A. The GTP-bound form interacts with RAC1. Interacts with CLN3. Interacts with CHM, the substrate-binding subunit of the Rab geranylgeranyltransferase complex. Interacts with C9orf72. Does not interact with HPS4 and the BLOC-3 complex (heterodimer of HPS1 and HPS4). Interacts with CLN5. Interacts with PLEKHM1 (via N- and C-terminus). Interacts with PRPH; the interaction is direct. Interacts with VPS13A. The GDP-bound form interacts with RIMOC1. Interacts with the MON1A-CCZ1B complex and this interaction is enhanced in the presence of RIMOC1. Interacts with VPS39 and VPS41. Forms a ternary complex with LAMP2 and RUFY4; the interaction with LAMP2 is mediated by RUFY4 (via RUN and coiled coil domains). It depends on Mg(2+) as a cofactor. Deubiquitination at Lys-191 and Lys-194 by USP32. In terms of processing, phosphorylated at Ser-72 by LRRK1; phosphorylation is dependent on protein kinase C (PKC) activation of LRRK1. Post-translationally, prenylated. Prenylation is required for association with cellular membranes.

It localises to the cytoplasmic vesicle. The protein localises to the phagosome membrane. Its subcellular location is the late endosome membrane. The protein resides in the lysosome membrane. It is found in the melanosome membrane. It localises to the autophagosome membrane. The protein localises to the lipid droplet. Its subcellular location is the endosome membrane. The protein resides in the mitochondrion membrane. The catalysed reaction is GTP + H2O = GDP + phosphate + H(+). With respect to regulation, regulated by guanine nucleotide exchange factors (GEFs) which promote the exchange of bound GDP for free GTP. Regulated by GTPase activating proteins (GAPs) which increase the GTP hydrolysis activity. Inhibited by GDP dissociation inhibitors (GDIs). In terms of biological role, the small GTPases Rab are key regulators of intracellular membrane trafficking, from the formation of transport vesicles to their fusion with membranes. Rabs cycle between an inactive GDP-bound form and an active GTP-bound form that is able to recruit to membranes different sets of downstream effectors directly responsible for vesicle formation, movement, tethering and fusion. In its active state, RAB7A binds to a variety of effector proteins playing a key role in the regulation of endo-lysosomal trafficking. Governs early-to-late endosomal maturation, microtubule minus-end as well as plus-end directed endosomal migration and positioning, and endosome-lysosome transport through different protein-protein interaction cascades. Also plays a central role in growth-factor-mediated cell signaling, nutrient-transporter-mediated nutrient uptake, neurotrophin transport in the axons of neurons and lipid metabolism. Also involved in regulation of some specialized endosomal membrane trafficking, such as maturation of melanosomes, pathogen-induced phagosomes (or vacuoles) and autophagosomes. Plays a role in the maturation and acidification of phagosomes that engulf pathogens, such as S.aureus and Mycobacteria. Plays a role in the fusion of phagosomes with lysosomes. In concert with RAC1, plays a role in regulating the formation of RBs (ruffled borders) in osteoclasts. Controls the endosomal trafficking and neurite outgrowth signaling of NTRK1/TRKA. Regulates the endocytic trafficking of the EGF-EGFR complex by regulating its lysosomal degradation. Involved in the ADRB2-stimulated lipolysis through lipophagy, a cytosolic lipase-independent autophagic pathway. Required for the exosomal release of SDCBP, CD63 and syndecan. Required for vesicular trafficking and cell surface expression of ACE2. May play a role in PRPH neuronal intermediate filament assembly. The protein is Ras-related protein Rab-7a (RAB7A) of Bos taurus (Bovine).